Reading from the N-terminus, the 278-residue chain is Malonyl-[acyl-carrier protein] O-methyltransferase (278 aa).

It belongs to the methyltransferase superfamily.

The enzyme catalyses malonyl-[ACP] + S-adenosyl-L-methionine = malonyl-[ACP] methyl ester + S-adenosyl-L-homocysteine. Its pathway is cofactor biosynthesis; biotin biosynthesis. In terms of biological role, converts the free carboxyl group of a malonyl-thioester to its methyl ester by transfer of a methyl group from S-adenosyl-L-methionine (SAM). It allows to synthesize pimeloyl-ACP via the fatty acid synthetic pathway. The sequence is that of Malonyl-[acyl-carrier protein] O-methyltransferase from Brevibacillus brevis (strain 47 / JCM 6285 / NBRC 100599).